The following is a 68-amino-acid chain: Palustrin-1c (68 aa).

A signal peptide spans 1 to 22; sequence MFTMKKSLLLLFFLGTISLSLC. A propeptide spanning residues 23–39 is cleaved from the precursor; it reads EEERGADEEEGDGEKLT. Cysteines 62 and 68 form a disulfide.

In terms of tissue distribution, expressed by the skin glands.

It localises to the secreted. Antimicrobial peptide. This Odorrana versabilis (Chinese bamboo leaf odorous frog) protein is Palustrin-1c.